A 372-amino-acid chain; its full sequence is MATSPQKSPSVPKSPTPKSPPSRKKDDSFLGKLGGTLARRKKAKEVSEFQEEGMNAINLPLSPISFELDPEDTMLEENEVRTMVDPNSRNDPKLQELMKVLIDWINDVLVGERIIVKDLAEDLYDGQVLQKLFEKLESEKLNVAEVTQSEIAQKQKLQTVLEKINEALKLPPRSIKWNVDSVHAKNLVAILHLLVALSQYFRAPIRLPDHVSIQVVVVQKREGILQSRQIQEEITGNTEALSGRHERDAFDTLFDHAPDKLNVVKKTLITFVNKHLNKLNLEVTELETQFADGVYLVLLMGLLEGYFVPLHSFFLTPDSFEQKVLNVSFAFELMQDGGLEKPKPRPEDIVNCDLKSTLRVLYNLFTKYRNVE.

The span at 1–11 (MATSPQKSPSV) shows a compositional bias: low complexity. The tract at residues 1–44 (MATSPQKSPSVPKSPTPKSPPSRKKDDSFLGKLGGTLARRKKAK) is disordered. A2 carries the N-acetylalanine modification. Residues S8, S14, and S19 each carry the phosphoserine modification. The tract at residues 21-25 (PSRKK) is interaction with ARHGAP31. A phosphoserine mark is found at S28 and S62. 2 consecutive Calponin-homology (CH) domains span residues 95 to 202 (QELM…QYFR) and 262 to 369 (NVVK…TKYR). The interval 223–372 (GILQSRQIQE…NLFTKYRNVE (150 aa)) is required for interaction with TESK1 and ILK.

It belongs to the parvin family. Component of the heterotrimeric IPP (ILK-PINCH-PARVIN) complex composed of ILK, LIMS1/PINCH and PARVA; the complex binds to F-actin via the C-terminal tail of LIMS1 and the N-terminal region of PARVA, promoting F-actin filament bundling. Interacts with TGFB1I1. Interacts with ARHGAP31. Interacts with the actin cytoskeleton. Interacts (via C-terminus) with TESK1 (via C-terminus); the interaction inhibits TESK1 kinase activity. Interacts with PXN/PAXILLIN (via LD motif 4). As to expression, widely expressed.

It is found in the cell junction. It localises to the focal adhesion. The protein localises to the cell membrane. The protein resides in the cytoplasm. Its subcellular location is the cytoskeleton. It is found in the myofibril. It localises to the sarcomere. The protein localises to the z line. Its function is as follows. Plays a role in sarcomere organization and in smooth muscle cell contraction. Required for normal development of the embryonic cardiovascular system, and for normal septation of the heart outflow tract. Plays a role in sprouting angiogenesis and is required for normal adhesion of vascular smooth muscle cells to endothelial cells during blood vessel development. Plays a role in the reorganization of the actin cytoskeleton, formation of lamellipodia and ciliogenesis. Plays a role in the establishment of cell polarity, cell adhesion, cell spreading, and directed cell migration. Within the IPP (ILK-PINCH-PARVIN) complex, binds to F-actin, promoting F-actin bundling, a process required to generate force for actin cytoskeleton reorganization and subsequent dynamic cell adhesion events such as cell spreading and migration. The sequence is that of Alpha-parvin (Parva) from Rattus norvegicus (Rat).